The following is a 75-amino-acid chain: Small ribosomal subunit protein bS18c (75 aa).

Positions M1–L12 are enriched in basic residues. The segment at M1–I21 is disordered.

Belongs to the bacterial ribosomal protein bS18 family. In terms of assembly, part of the 30S ribosomal subunit.

It localises to the plastid. Its subcellular location is the chloroplast. The polypeptide is Small ribosomal subunit protein bS18c (Cycas taitungensis (Prince sago)).